Consider the following 459-residue polypeptide: Chromosomal replication initiator protein DnaA (459 aa).

The interval 1-74 (MQKIETFWHF…DEMAQDHFNE (74 aa)) is domain I, interacts with DnaA modulators. Residues 74–122 (ERISFRLELREPAESEAQTVRTSAQKNREDKKPAAEKTQGVTSRKTNPS) form a domain II region. The segment at 87-122 (ESEAQTVRTSAQKNREDKKPAAEKTQGVTSRKTNPS) is disordered. A compositionally biased stretch (polar residues) spans 89 to 98 (EAQTVRTSAQ). The segment covering 99–108 (KNREDKKPAA) has biased composition (basic and acidic residues). Residues 112–122 (QGVTSRKTNPS) show a composition bias toward polar residues. Residues 123 to 339 (QLNASFTFDA…GALKRVLAFS (217 aa)) are domain III, AAA+ region. ATP-binding residues include G167, G169, K170, and T171. A domain IV, binds dsDNA region spans residues 340-459 (RFTGHSISLD…FNALMHILRG (120 aa)).

Belongs to the DnaA family. As to quaternary structure, oligomerizes as a right-handed, spiral filament on DNA at oriC.

The protein resides in the cytoplasm. Its function is as follows. Plays an essential role in the initiation and regulation of chromosomal replication. ATP-DnaA binds to the origin of replication (oriC) to initiate formation of the DNA replication initiation complex once per cell cycle. Binds the DnaA box (a 9 base pair repeat at the origin) and separates the double-stranded (ds)DNA. Forms a right-handed helical filament on oriC DNA; dsDNA binds to the exterior of the filament while single-stranded (ss)DNA is stabiized in the filament's interior. The ATP-DnaA-oriC complex binds and stabilizes one strand of the AT-rich DNA unwinding element (DUE), permitting loading of DNA polymerase. After initiation quickly degrades to an ADP-DnaA complex that is not apt for DNA replication. Binds acidic phospholipids. The sequence is that of Chromosomal replication initiator protein DnaA from Nitrosomonas europaea (strain ATCC 19718 / CIP 103999 / KCTC 2705 / NBRC 14298).